Here is a 49-residue protein sequence, read N- to C-terminus: uncharacterized protein (49 aa).

This is an uncharacterized protein from Archaeoglobus fulgidus (strain ATCC 49558 / DSM 4304 / JCM 9628 / NBRC 100126 / VC-16).